Reading from the N-terminus, the 453-residue chain is Methionine aminopeptidase 2-1 (453 aa).

A compositionally biased stretch (basic and acidic residues) spans 1-12; sequence MGSKTPDGHRQS. The interval 1–101 is disordered; the sequence is MGSKTPDGHR…TTPPRVPLST (101 aa). Positions 46-57 are enriched in acidic residues; it reads GEDDDDDDENEE. Positions 67–82 are enriched in basic residues; sequence KKKKRKKSKKKNKKSK. His210 contacts substrate. Positions 231, 242, and 306 each coordinate a divalent metal cation. Residue His314 coordinates substrate. The a divalent metal cation site is built by Glu339 and Glu434.

The protein belongs to the peptidase M24A family. Methionine aminopeptidase eukaryotic type 2 subfamily. It depends on Co(2+) as a cofactor. The cofactor is Zn(2+). Mn(2+) serves as cofactor. Requires Fe(2+) as cofactor.

It localises to the cytoplasm. The enzyme catalyses Release of N-terminal amino acids, preferentially methionine, from peptides and arylamides.. In terms of biological role, cotranslationally removes the N-terminal methionine from nascent proteins. The N-terminal methionine is often cleaved when the second residue in the primary sequence is small and uncharged (Met-Ala-, Cys, Gly, Pro, Ser, Thr, or Val). The sequence is that of Methionine aminopeptidase 2-1 from Aspergillus terreus (strain NIH 2624 / FGSC A1156).